A 130-amino-acid polypeptide reads, in one-letter code: Small ribosomal subunit protein uS9 (130 aa).

Residues arginine 109–arginine 130 are disordered.

This sequence belongs to the universal ribosomal protein uS9 family.

This is Small ribosomal subunit protein uS9 from Maridesulfovibrio salexigens (strain ATCC 14822 / DSM 2638 / NCIMB 8403 / VKM B-1763) (Desulfovibrio salexigens).